The following is a 343-amino-acid chain: GDSL esterase/lipase EXL4 (343 aa).

Residues 1-21 (MCSKITLVLTLFSSYFISTDA) form the signal peptide. N-linked (GlcNAc...) asparagine glycosylation occurs at asparagine 23. Serine 35 functions as the Nucleophile in the catalytic mechanism. Residues aspartate 318 and histidine 321 contribute to the active site.

This sequence belongs to the 'GDSL' lipolytic enzyme family. In terms of tissue distribution, flower buds and pollen.

The protein resides in the secreted. The protein localises to the extracellular space. Its subcellular location is the extracellular matrix. It is found in the pollen coat. Required for the formation of pollen coats and male fertility. This Arabidopsis thaliana (Mouse-ear cress) protein is GDSL esterase/lipase EXL4 (EXL4).